Consider the following 114-residue polypeptide: Large ribosomal subunit protein bL19 (114 aa).

This sequence belongs to the bacterial ribosomal protein bL19 family.

Its function is as follows. This protein is located at the 30S-50S ribosomal subunit interface and may play a role in the structure and function of the aminoacyl-tRNA binding site. This is Large ribosomal subunit protein bL19 from Bacillus cereus (strain AH187).